Here is a 326-residue protein sequence, read N- to C-terminus: Aspartate carbamoyltransferase catalytic subunit (326 aa).

Carbamoyl phosphate contacts are provided by Arg-58 and Thr-59. Lys-86 is a binding site for L-aspartate. Carbamoyl phosphate contacts are provided by Arg-108, His-141, and Gln-144. L-aspartate is bound by residues Arg-181 and Arg-239. 2 residues coordinate carbamoyl phosphate: Gly-280 and Pro-281.

This sequence belongs to the aspartate/ornithine carbamoyltransferase superfamily. ATCase family. As to quaternary structure, heterododecamer (2C3:3R2) of six catalytic PyrB chains organized as two trimers (C3), and six regulatory PyrI chains organized as three dimers (R2).

The enzyme catalyses carbamoyl phosphate + L-aspartate = N-carbamoyl-L-aspartate + phosphate + H(+). The protein operates within pyrimidine metabolism; UMP biosynthesis via de novo pathway; (S)-dihydroorotate from bicarbonate: step 2/3. Its function is as follows. Catalyzes the condensation of carbamoyl phosphate and aspartate to form carbamoyl aspartate and inorganic phosphate, the committed step in the de novo pyrimidine nucleotide biosynthesis pathway. This is Aspartate carbamoyltransferase catalytic subunit from Synechococcus sp. (strain JA-2-3B'a(2-13)) (Cyanobacteria bacterium Yellowstone B-Prime).